The following is a 1249-amino-acid chain: Pleckstrin homology-like domain family B member 2 (1249 aa).

Disordered regions lie at residues 64–85 (QPVSAKRSPSPMGTSVRSSPSL) and 128–154 (DHYTGRDSERSTRLSEKPPYSRYSSRN). 2 positions are modified to phosphoserine: Ser71 and Ser73. Residues 74 to 84 (PMGTSVRSSPS) are compositionally biased toward polar residues. Basic and acidic residues predominate over residues 128–143 (DHYTGRDSERSTRLSE). Residues Ser156, Ser203, Ser241, and Ser244 each carry the phosphoserine modification. 2 disordered regions span residues 190–248 (SPIS…LSNM) and 264–289 (NQMSPLSLPPRSSLGNSRRGQLGEKD). Residues 231-248 (ENVSVRTRKYSGSSLSNM) are compositionally biased toward polar residues. The segment covering 267–283 (SPLSLPPRSSLGNSRRG) has biased composition (low complexity). 11 positions are modified to phosphoserine: Ser329, Ser333, Ser347, Ser380, Ser383, Ser389, Ser411, Ser416, Ser465, Ser486, and Ser510. The tract at residues 388–424 (DSDLESLRQSSETPQPVLRERKSSISSISGRDDLMDY) is disordered. Phosphothreonine is present on residues Thr546 and Thr570. Coiled-coil stretches lie at residues 580-692 (TQEL…LDNC) and 718-803 (FEDL…LCNL). Residues 866 to 934 (VSQPQSSEHF…LGQSNSCGSV (69 aa)) form a disordered region. Residues 873–888 (EHFRSLEERKKQHKEG) show a composition bias toward basic and acidic residues. A Phosphothreonine modification is found at Thr894. The span at 901-919 (TPSLSPHFSSATMGRSTTP) shows a compositional bias: polar residues. The stretch at 1028–1094 (IARIEEMERL…QKLIEKEVKI (67 aa)) forms a coiled coil. In terms of domain architecture, PH spans 1139-1242 (EKTCRGYLIK…WMDVIVTGAE (104 aa)).

Interacts with FLNC. Interacts with AMOTL2; interaction may facilitate PHLDB2 localization to the myotube podosome cortex that surrounds the core. Part of a cortical microtubule stabilization complex (CMSC) composed of KANK1, PPFIA1, PPFIBP1, ERC1/ELKS, PHLDB2/LL5beta, CLASPs, KIF21A and possibly additional interactors; within CMSCs KANK1 and PHLDB2/LL5beta appear to be the core components for targeting of microtubule-binding proteins KIF21A and CLASPs, whereas PPFIA1, PPFIBP1 and ERC1/ELKS serve as scaffolds for protein clustering. In terms of tissue distribution, expressed at postsynaptic membranes of skeletal neuromuscular junctions (at protein level).

Its subcellular location is the cytoplasm. The protein resides in the membrane. The protein localises to the cell projection. It localises to the podosome. It is found in the cell cortex. In terms of biological role, seems to be involved in the assembly of the postsynaptic apparatus. May play a role in acetyl-choline receptor (AChR) aggregation in the postsynaptic membrane. This is Pleckstrin homology-like domain family B member 2 (Phldb2) from Mus musculus (Mouse).